Reading from the N-terminus, the 428-residue chain is Immunoglobulin superfamily containing leucine-rich repeat protein (428 aa).

Residues 1-18 (MQELHLLWWALLLGLAQA) form the signal peptide. The LRRNT domain maps to 19–50 (CPEPCDCGEKYGFQIADCAYRDLESVPPGFPA). N51 carries N-linked (GlcNAc...) asparagine glycosylation. 5 LRR repeats span residues 51–72 (NVTT…AFRE), 75–96 (LLQS…ALAS), 99–122 (HLKS…HNLS), 123–144 (ALQL…AFRS), and 147–168 (ALRS…TFTP). An LRRCT domain is found at 180-231 (NPFDCTCGIVWLKTWALTTAVSIPEQDNIACTSPHVLKGTPLSRLPPLPCSA). The region spanning 232 to 343 (PSVQLSYQPS…GSAESSVDVA (112 aa)) is the Ig-like domain. A disulfide bond links C257 and C327. N-linked (GlcNAc...) asparagine glycosylation is present at N309.

Expressed in various tissues including retina, heart, skeletal muscle, prostate, ovary, small intestine, thyroid, adrenal cortex, testis, stomach and spinal cord.

It is found in the secreted. The sequence is that of Immunoglobulin superfamily containing leucine-rich repeat protein (ISLR) from Homo sapiens (Human).